The following is a 257-amino-acid chain: Imidazole glycerol phosphate synthase subunit HisF (257 aa).

Residues Asp-11 and Asp-130 contribute to the active site.

The protein belongs to the HisA/HisF family. In terms of assembly, heterodimer of HisH and HisF.

The protein localises to the cytoplasm. It carries out the reaction 5-[(5-phospho-1-deoxy-D-ribulos-1-ylimino)methylamino]-1-(5-phospho-beta-D-ribosyl)imidazole-4-carboxamide + L-glutamine = D-erythro-1-(imidazol-4-yl)glycerol 3-phosphate + 5-amino-1-(5-phospho-beta-D-ribosyl)imidazole-4-carboxamide + L-glutamate + H(+). It participates in amino-acid biosynthesis; L-histidine biosynthesis; L-histidine from 5-phospho-alpha-D-ribose 1-diphosphate: step 5/9. In terms of biological role, IGPS catalyzes the conversion of PRFAR and glutamine to IGP, AICAR and glutamate. The HisF subunit catalyzes the cyclization activity that produces IGP and AICAR from PRFAR using the ammonia provided by the HisH subunit. This chain is Imidazole glycerol phosphate synthase subunit HisF, found in Shewanella piezotolerans (strain WP3 / JCM 13877).